A 113-amino-acid chain; its full sequence is Hydrogenase maturation factor HybF (113 aa).

Ni(2+) contacts are provided by His-2 and Glu-3. Zn(2+) contacts are provided by Cys-73, Cys-76, Cys-89, and Cys-92.

It belongs to the HypA/HybF family. HybF subfamily.

Functionally, involved in the maturation of [NiFe] hydrogenases. Required for nickel insertion into the metal center of the hydrogenase. This is Hydrogenase maturation factor HybF from Escherichia coli O157:H7.